An 88-amino-acid chain; its full sequence is Small ribosomal subunit protein bS20 (88 aa).

The disordered stretch occupies residues 1–25; sequence MANSAQARKRVRQNNTRRQHAASQR. Over residues 7–20 the composition is skewed to basic residues; sequence ARKRVRQNNTRRQH.

The protein belongs to the bacterial ribosomal protein bS20 family.

In terms of biological role, binds directly to 16S ribosomal RNA. The protein is Small ribosomal subunit protein bS20 of Psychrobacter sp. (strain PRwf-1).